The chain runs to 209 residues: Molybdenum cofactor guanylyltransferase (209 aa).

GTP contacts are provided by residues 13–15 (LAG), Lys-26, Asn-54, Asp-72, and Asp-107. Residue Asp-107 coordinates Mg(2+).

This sequence belongs to the MobA family. In terms of assembly, monomer. Mg(2+) serves as cofactor.

Its subcellular location is the cytoplasm. It catalyses the reaction Mo-molybdopterin + GTP + H(+) = Mo-molybdopterin guanine dinucleotide + diphosphate. In terms of biological role, transfers a GMP moiety from GTP to Mo-molybdopterin (Mo-MPT) cofactor (Moco or molybdenum cofactor) to form Mo-molybdopterin guanine dinucleotide (Mo-MGD) cofactor. The polypeptide is Molybdenum cofactor guanylyltransferase (Nitrobacter hamburgensis (strain DSM 10229 / NCIMB 13809 / X14)).